Consider the following 267-residue polypeptide: DNA damage-regulated autophagy modulator protein 2 (267 aa).

The next 6 helical transmembrane spans lie at 8-28, 53-73, 87-107, 118-138, 160-180, and 203-223; these read LSFL…FSYI, RCLF…TMYV, LIIK…LGLS, FIVH…YMFV, LLLV…SSIL, and VLHL…FGFF.

This sequence belongs to the DRAM/TMEM150 family. Expressed in the retina.

It is found in the lysosome membrane. It localises to the photoreceptor inner segment. Its subcellular location is the apical cell membrane. Plays a role in the initiation of autophagy. In the retina, might be involved in the process of photoreceptor cells renewal and recycling to preserve visual function. Induces apoptotic cell death when coexpressed with DRAM1. This is DNA damage-regulated autophagy modulator protein 2 (Dram2) from Mus musculus (Mouse).